The chain runs to 434 residues: Trigger factor (434 aa).

The PPIase FKBP-type domain maps to 161-246; that stretch reads KDIVTIDFKG…IHKVEEPQLP (86 aa).

This sequence belongs to the FKBP-type PPIase family. Tig subfamily.

The protein resides in the cytoplasm. It carries out the reaction [protein]-peptidylproline (omega=180) = [protein]-peptidylproline (omega=0). Its function is as follows. Involved in protein export. Acts as a chaperone by maintaining the newly synthesized protein in an open conformation. Functions as a peptidyl-prolyl cis-trans isomerase. The polypeptide is Trigger factor (Marinobacter nauticus (strain ATCC 700491 / DSM 11845 / VT8) (Marinobacter aquaeolei)).